The sequence spans 471 residues: Trigger factor (471 aa).

The 96-residue stretch at 169–264 (GDVAVVDFKG…LKEIKEKELP (96 aa)) folds into the PPIase FKBP-type domain.

This sequence belongs to the FKBP-type PPIase family. Tig subfamily.

The protein resides in the cytoplasm. The enzyme catalyses [protein]-peptidylproline (omega=180) = [protein]-peptidylproline (omega=0). Involved in protein export. Acts as a chaperone by maintaining the newly synthesized protein in an open conformation. Functions as a peptidyl-prolyl cis-trans isomerase. The protein is Trigger factor of Nostoc sp. (strain PCC 7120 / SAG 25.82 / UTEX 2576).